Consider the following 341-residue polypeptide: Coiled-coil domain-containing protein 86 (341 aa).

The segment at 1–341 (MGTPLRRSRR…QPPQRPVAKV (341 aa)) is disordered. Phosphoserine is present on S18. Positions 26–49 (EVSRAKRALVDFKSNPEETRELES) are enriched in basic and acidic residues. Residue S59 is modified to Phosphoserine. The span at 64 to 73 (PETSPESPCP) shows a compositional bias: low complexity. At T66 the chain carries Phosphothreonine. Residues S67, S70, S81, S92, S103, S114, and S124 each carry the phosphoserine modification. Residues 105-114 (AGQTESNPES) show a composition bias toward polar residues. The span at 130–139 (EVAHAKEEVI) shows a compositional bias: basic and acidic residues. A phosphoserine mark is found at S142, S169, S170, and S200. Positions 219–235 (GKPKSGRVWKDRSKKRF) are enriched in basic residues. Residues 254–298 (ERQERKLAKDFARHLEEEKQRRRQEKKERRAENLRRRLENERKAE) are compositionally biased toward basic and acidic residues. The stretch at 261-304 (AKDFARHLEEEKQRRRQEKKERRAENLRRRLENERKAEIVQVIR) forms a coiled coil. Positions 307-317 (AKLKKAKKKQL) are enriched in basic residues. At R323 the chain carries Citrulline.

Post-translationally, citrullinated by PADI4.

It is found in the nucleus. It localises to the chromosome. Its subcellular location is the nucleolus. Required for proper chromosome segregation during mitosis and error-free mitotic progression. The sequence is that of Coiled-coil domain-containing protein 86 from Rattus norvegicus (Rat).